Consider the following 247-residue polypeptide: Carboxy-S-adenosyl-L-methionine synthase (247 aa).

S-adenosyl-L-methionine is bound by residues Tyr-39, 64–66, 89–90, 117–118, Asn-132, and Arg-199; these read GCS, DN, and DI.

The protein belongs to the class I-like SAM-binding methyltransferase superfamily. Cx-SAM synthase family. Homodimer.

The enzyme catalyses prephenate + S-adenosyl-L-methionine = carboxy-S-adenosyl-L-methionine + 3-phenylpyruvate + H2O. In terms of biological role, catalyzes the conversion of S-adenosyl-L-methionine (SAM) to carboxy-S-adenosyl-L-methionine (Cx-SAM). The chain is Carboxy-S-adenosyl-L-methionine synthase from Salmonella choleraesuis (strain SC-B67).